Here is a 450-residue protein sequence, read N- to C-terminus: RUN domain-containing protein 3B (450 aa).

In terms of domain architecture, RUN spans aspartate 48 to glutamate 180. The segment at aspartate 203 to proline 225 is disordered. Positions isoleucine 291–histidine 317 form a coiled coil.

It belongs to the RUNDC3 family.

The polypeptide is RUN domain-containing protein 3B (rundc3b) (Danio rerio (Zebrafish)).